The sequence spans 429 residues: Ribosomal RNA small subunit methyltransferase B (429 aa).

S-adenosyl-L-methionine-binding positions include 254–260 (CAAPGGK), aspartate 277, aspartate 303, and aspartate 322. Cysteine 375 functions as the Nucleophile in the catalytic mechanism. A disordered region spans residues 397–419 (ALSETGTPDQPGQQNLPGGEEGD). Polar residues predominate over residues 400-412 (ETGTPDQPGQQNL).

Belongs to the class I-like SAM-binding methyltransferase superfamily. RsmB/NOP family.

It is found in the cytoplasm. The enzyme catalyses cytidine(967) in 16S rRNA + S-adenosyl-L-methionine = 5-methylcytidine(967) in 16S rRNA + S-adenosyl-L-homocysteine + H(+). Functionally, specifically methylates the cytosine at position 967 (m5C967) of 16S rRNA. This is Ribosomal RNA small subunit methyltransferase B from Salmonella paratyphi A (strain ATCC 9150 / SARB42).